The sequence spans 1041 residues: MATPAGLERWVQDELHSVLGLSERHVAQFLIGTAQRCTSAEEFVQRLRDTDTLDLSGPARDFALRLWNKVPRKAVVEKPARAAEREARALLEKNRSYRLLEDSEESSEETVSRAGSSLQKKRKKRKHLRKKREEEEEEEASEKGKKKTGGSKQQTEKPESEDEWERTERERLQDLEERDAFAERVRQRDKDRTRNVLERSDKKAYEEAQKRLKMAEEDRKAMVPELRKKSRREYLAKREREKLEDLEAELADEEFLFGDVELSRHERQELKYKRRVRDLAREYRAAGEQEKLEATNRYHMPKETRGQPARAVDLVEEESGAPGEEQRRWEEARLGAASLKFGARDAASQEPKYQLVLEEEETIEFVRATQLQGDEEPSAPPTSTQAQQKESIQAVRRSLPVFPFREELLAAIANHQVLIIEGETGSGKTTQIPQYLFEEGYTNKGMKIACTQPRRVAAMSVAARVAREMGVKLGNEVGYSIRFEDCTSERTVLRYMTDGMLLREFLSEPDLASYSVVMVDEAHERTLHTDILFGLIKDVARFRPELKVLVASATMDTARFSTFFDDAPVFRIPGRRFPVDIFYTKAPEADYLEACVVSVLQIHVTQPPGDILVFLTGQEEIEAACEMLQDRCRRLGSKIRELLVLPIYANLPSDMQARIFQPTPPGARKVVVATNIAETSLTIEGIIYVLDPGFCKQKSYNPRTGMESLTVTPCSKASANQRAGRAGRVAAGKCFRLYTAWAYQHELEETTVPEIQRTSLGNVVLLLKSLGIHDLMHFDFLDPPPYETLLLALEQLYALGALNHLGELTTSGRKMAELPVDPMLSKMILASEKYSCSEEILTVAAMLSVNNSIFYRPKDKVVHADNARVNFFLPGGDHLVLLNVYTQWAESGYSSQWCYENFVQFRSMRRARDVREQLEGLLERVEVGLSSCQGDYIRVRKAITAGYFYHTARLTRSGYRTVKQQQTVFIHPNSSLFEQQPRWLLYHELVLTTKEFMRQVLEIESSWLLEVAPHYYKAKELEDPHAKKMPKKIGKTREELG.

Disordered regions lie at residues 101–207 and 371–391; these read EDSE…AYEE and LQGD…QKES. A phosphoserine mark is found at S103, S106, and S107. Over residues 119-130 the composition is skewed to basic residues; sequence QKKRKKRKHLRK. Position 160 is a phosphoserine (S160). Positions 166 to 207 are enriched in basic and acidic residues; the sequence is RTERERLQDLEERDAFAERVRQRDKDRTRNVLERSDKKAYEE. Residues 381-391 are compositionally biased toward polar residues; the sequence is PTSTQAQQKES. A Helicase ATP-binding domain is found at 409-573; that stretch reads LAAIANHQVL…FDDAPVFRIP (165 aa). 422-429 lines the ATP pocket; sequence GETGSGKT. The short motif at 520 to 523 is the DEAH box element; sequence DEAH. Residues 598–771 form the Helicase C-terminal domain; the sequence is SVLQIHVTQP…NVVLLLKSLG (174 aa). T712 bears the Phosphothreonine mark.

This sequence belongs to the DEAD box helicase family. DEAH subfamily. DDX16/PRP8 sub-subfamily. In terms of assembly, component of pre-catalytic spliceosome complexes. Component of the minor spliceosome, which splices U12-type introns. Interacts with GPKOW. Interacts with TRIM6. Interacts with RIGI. In terms of tissue distribution, expressed in the spleen, thyroid and testis. Also expressed in the brain and cerebellum.

The protein localises to the nucleus. The protein resides in the nucleoplasm. Its subcellular location is the cytoplasm. It catalyses the reaction ATP + H2O = ADP + phosphate + H(+). Its function is as follows. Required for pre-mRNA splicing as a component of the spliceosome. Contributes to pre-mRNA splicing after spliceosome formation and prior to the first transesterification reaction. As a component of the minor spliceosome, involved in the splicing of U12-type introns in pre-mRNAs. Also plays a role in innate antiviral response by acting as a pattern recognition receptor sensing splicing signals in viral RNA. Mechanistically, TRIM6 promotes the interaction between unanchored 'Lys-48'-polyubiquitin chains and DHX16, leading to DHX16 interaction with RIGI and ssRNA to amplify RIGI-dependent innate antiviral immune responses. This is Pre-mRNA-splicing factor ATP-dependent RNA helicase DHX16 (DHX16) from Homo sapiens (Human).